The following is a 591-amino-acid chain: Developmental and secondary metabolism regulator VEA1 (591 aa).

Residues 1-22 are disordered; the sequence is MATKASSILHPPNETEHTMSRI. Over residues 13–22 the composition is skewed to basic and acidic residues; the sequence is NETEHTMSRI. Positions 26-235 constitute a Velvet domain; sequence GKKLTYNLKV…AEQGCRVRIR (210 aa). Residues 40–45 carry the Nuclear localization signal motif; sequence ERARAC. Residues 238–547 form a disordered region; sequence VRMRRREPKP…TSGGSDDEIM (310 aa). Basic and acidic residues predominate over residues 245-260; sequence PKPNKDYGAYDDRRIT. Residues 306–321 show a composition bias toward polar residues; it reads HQQPSPNLAATPQSHL. Residues 330 to 347 are compositionally biased toward pro residues; the sequence is YHAPPPPPTAHPAPPPAY. The segment covering 386–395 has biased composition (polar residues); it reads YDQSKSSLPM. Over residues 422 to 433 the composition is skewed to low complexity; it reads PSQLHPTQQYQQ. Over residues 434–448 the composition is skewed to pro residues; it reads PTPPPPPPAAIAPHP. A PEST region spans residues 452 to 493; sequence RTPTKPSPSTFFPPTPSRLSVEVDSSNEADDAILNAIRTRRG. Basic and acidic residues predominate over residues 494–516; the sequence is YILDEKSGATKRSRDSSDHDLKP.

This sequence belongs to the velvet family. VeA subfamily. Component of the heterotrimeric velvet complex composed of LAE1, VEA1 and VEL2; VEA1 acting as a bridging protein between LAE1 and VEL2.

It localises to the nucleus. Its subcellular location is the cytoplasm. Component of the velvet transcription factor complex that controls sexual/asexual developmental ratio in response to light, promoting sexual development in the darkness while stimulating asexual sporulation under illumination. The velvet complex hat acts as a global regulator for secondary metabolite gene expression. Regulates cleistothecial formation and hyphal growth. Acts as a positive regulator of virulence. The protein is Developmental and secondary metabolism regulator VEA1 of Ajellomyces capsulatus (Darling's disease fungus).